The sequence spans 218 residues: N-(5'-phosphoribosyl)anthranilate isomerase (218 aa).

The protein belongs to the TrpF family.

It carries out the reaction N-(5-phospho-beta-D-ribosyl)anthranilate = 1-(2-carboxyphenylamino)-1-deoxy-D-ribulose 5-phosphate. The protein operates within amino-acid biosynthesis; L-tryptophan biosynthesis; L-tryptophan from chorismate: step 3/5. The chain is N-(5'-phosphoribosyl)anthranilate isomerase from Halobacterium salinarum (strain ATCC 29341 / DSM 671 / R1).